A 548-amino-acid polypeptide reads, in one-letter code: Lysine--tRNA ligase (548 aa).

A 'HIGH' region motif is present at residues P43–N51. The short motif at P308–S312 is the 'KMSKS' region element.

Belongs to the class-I aminoacyl-tRNA synthetase family.

Its subcellular location is the cytoplasm. The enzyme catalyses tRNA(Lys) + L-lysine + ATP = L-lysyl-tRNA(Lys) + AMP + diphosphate. The sequence is that of Lysine--tRNA ligase from Halobacterium salinarum (strain ATCC 700922 / JCM 11081 / NRC-1) (Halobacterium halobium).